A 173-amino-acid polypeptide reads, in one-letter code: ATP synthase subunit b (173 aa).

A helical transmembrane segment spans residues 12–34; sequence AFGNLYAIGWSAVNFLVLLALMY.

The protein belongs to the ATPase B chain family. As to quaternary structure, F-type ATPases have 2 components, F(1) - the catalytic core - and F(0) - the membrane proton channel. F(1) has five subunits: alpha(3), beta(3), gamma(1), delta(1), epsilon(1). F(0) has three main subunits: a(1), b(2) and c(10-14). The alpha and beta chains form an alternating ring which encloses part of the gamma chain. F(1) is attached to F(0) by a central stalk formed by the gamma and epsilon chains, while a peripheral stalk is formed by the delta and b chains.

The protein localises to the cell membrane. F(1)F(0) ATP synthase produces ATP from ADP in the presence of a proton or sodium gradient. F-type ATPases consist of two structural domains, F(1) containing the extramembraneous catalytic core and F(0) containing the membrane proton channel, linked together by a central stalk and a peripheral stalk. During catalysis, ATP synthesis in the catalytic domain of F(1) is coupled via a rotary mechanism of the central stalk subunits to proton translocation. Its function is as follows. Component of the F(0) channel, it forms part of the peripheral stalk, linking F(1) to F(0). This chain is ATP synthase subunit b, found in Syntrophomonas wolfei subsp. wolfei (strain DSM 2245B / Goettingen).